We begin with the raw amino-acid sequence, 134 residues long: MATRALLLLLLLPPLLLLAGCAARPAPPRAPRHSDGTFTSELSRLRDSARLQRLLQGLVGKRSQQDPENNTAWTKSGEDRLCQLWSHMPALQAWMPMKPPVDQAWSPWLPPGLRAGALVSEPAIPAAEGSPMPP.

The first 21 residues, 1–21, serve as a signal peptide directing secretion; it reads MATRALLLLLLLPPLLLLAGC. Residues 22 to 31 constitute a propeptide that is removed on maturation; it reads AARPAPPRAP. Position 59 is a valine amide (Val-59). Residue Ser-63 is modified to Phosphoserine. The propeptide occupies 63–134; it reads SQQDPENNTA…PAAEGSPMPP (72 aa).

This sequence belongs to the glucagon family.

Its subcellular location is the secreted. Hormone involved in different processes, such as regulation of the pH of the duodenal content, food intake and water homeostasis. Exerts its biological effects by binding to secretin receptor (SCTR), a G-protein coupled receptor expressed in the basolateral domain of several cells. Acts as a key gastrointestinal hormone by regulating the pH of the duodenal content. Secreted by S cells of the duodenum in the crypts of Lieberkuehn and regulates the pH of the duodenum by (1) inhibiting the secretion of gastric acid from the parietal cells of the stomach and (2) stimulating the production of bicarbonate (NaHCO(3)) from the ductal cells of the pancreas. Production of bicarbonate is essential to neutralize the pH and ensure no damage is done to the small intestine by the gastric acid. In addition to regulating the pH of the duodenal content, plays a central role in diet induced thermogenesis: acts as a non-sympathetic brown fat (BAT) activator mediating prandial thermogenesis, which consequentially induces satiation. Mechanistically, secretin released by the gut after a meal binds to secretin receptor (SCTR) in brown adipocytes, activating brown fat thermogenesis by stimulating lipolysis, which is sensed in the brain and promotes satiation. Also able to stimulate lipolysis in white adipocytes. Also plays an important role in cellular osmoregulation: released into the systemic circulation in response to hyperosmolality and acts at different levels in the hypothalamus, pituitary and kidney to regulate water homeostasis. Also plays a role in the central nervous system, possibly by acting as a neuropeptide hormone: required for hippocampal synaptic function and neural progenitor cells maintenance. The protein is Secretin of Sus scrofa (Pig).